The primary structure comprises 560 residues: Dihydroxy-acid dehydratase (560 aa).

A [2Fe-2S] cluster-binding site is contributed by Cys50. Asp82 contacts Mg(2+). Position 123 (Cys123) interacts with [2Fe-2S] cluster. Mg(2+) is bound by residues Asp124 and Lys125. Lys125 is subject to N6-carboxylysine. A [2Fe-2S] cluster-binding site is contributed by Cys195. Mg(2+) is bound at residue Glu447. Ser473 functions as the Proton acceptor in the catalytic mechanism.

It belongs to the IlvD/Edd family. Homodimer. It depends on [2Fe-2S] cluster as a cofactor. Mg(2+) is required as a cofactor.

It catalyses the reaction (2R)-2,3-dihydroxy-3-methylbutanoate = 3-methyl-2-oxobutanoate + H2O. It carries out the reaction (2R,3R)-2,3-dihydroxy-3-methylpentanoate = (S)-3-methyl-2-oxopentanoate + H2O. It participates in amino-acid biosynthesis; L-isoleucine biosynthesis; L-isoleucine from 2-oxobutanoate: step 3/4. The protein operates within amino-acid biosynthesis; L-valine biosynthesis; L-valine from pyruvate: step 3/4. In terms of biological role, functions in the biosynthesis of branched-chain amino acids. Catalyzes the dehydration of (2R,3R)-2,3-dihydroxy-3-methylpentanoate (2,3-dihydroxy-3-methylvalerate) into 2-oxo-3-methylpentanoate (2-oxo-3-methylvalerate) and of (2R)-2,3-dihydroxy-3-methylbutanoate (2,3-dihydroxyisovalerate) into 2-oxo-3-methylbutanoate (2-oxoisovalerate), the penultimate precursor to L-isoleucine and L-valine, respectively. This Thermosynechococcus vestitus (strain NIES-2133 / IAM M-273 / BP-1) protein is Dihydroxy-acid dehydratase.